Reading from the N-terminus, the 155-residue chain is Small ribosomal subunit protein uS7c (155 aa).

Belongs to the universal ribosomal protein uS7 family. As to quaternary structure, part of the 30S ribosomal subunit.

It is found in the plastid. It localises to the chloroplast. One of the primary rRNA binding proteins, it binds directly to 16S rRNA where it nucleates assembly of the head domain of the 30S subunit. This chain is Small ribosomal subunit protein uS7c (rps7), found in Coelogyne cristata (Orchid).